The chain runs to 367 residues: Splicing factor U2AF-associated protein 2 (367 aa).

Residues 36-104 (YDPNSLKMNK…SKSENSEASP (69 aa)) are disordered. The segment covering 61–78 (TEGKESSNGEDRHTKRLY) has biased composition (basic and acidic residues). RRM domains lie at 112–193 (VYIQ…KMRV) and 268–329 (LLID…VVEA).

This sequence belongs to the HTATSF1 family. In terms of assembly, interacts with the U2AF large and U2AF small subunits.

Has a role in pre-mRNA splicing. This is Splicing factor U2AF-associated protein 2 (uap2) from Schizosaccharomyces pombe (strain 972 / ATCC 24843) (Fission yeast).